We begin with the raw amino-acid sequence, 71 residues long: Small ribosomal subunit protein bS21 (71 aa).

Residues 48-59 (AKASAVKRHAKK) show a composition bias toward basic residues. Positions 48-71 (AKASAVKRHAKKLSRENARRIRLY) are disordered. Positions 60–71 (LSRENARRIRLY) are enriched in basic and acidic residues.

Belongs to the bacterial ribosomal protein bS21 family.

The protein is Small ribosomal subunit protein bS21 of Aeromonas hydrophila subsp. hydrophila (strain ATCC 7966 / DSM 30187 / BCRC 13018 / CCUG 14551 / JCM 1027 / KCTC 2358 / NCIMB 9240 / NCTC 8049).